A 178-amino-acid polypeptide reads, in one-letter code: MEQFHGTTILSVRRGNVVALGGDGQVTLGNIVMKGTARKVRKVYSGKVLVGFAGGTADAFTLLERFESKLEKHQGHLMRASVELAKDWRTDRMLRRLEAMLLVADHETTLVITGNGDVLEPNDGIGAIGSGGTYAQSAAKALQENTELSPLEIVKKSLTIAGELCIYTNLSHTIETLD.

T7 is an active-site residue. Na(+) is bound by residues G162, C165, and T168.

The protein belongs to the peptidase T1B family. HslV subfamily. As to quaternary structure, a double ring-shaped homohexamer of HslV is capped on each side by a ring-shaped HslU homohexamer. The assembly of the HslU/HslV complex is dependent on binding of ATP.

It localises to the cytoplasm. The enzyme catalyses ATP-dependent cleavage of peptide bonds with broad specificity.. Allosterically activated by HslU binding. In terms of biological role, protease subunit of a proteasome-like degradation complex believed to be a general protein degrading machinery. This is ATP-dependent protease subunit HslV from Herminiimonas arsenicoxydans.